Consider the following 59-residue polypeptide: Large ribosomal subunit protein uL30 (59 aa).

It belongs to the universal ribosomal protein uL30 family. Part of the 50S ribosomal subunit.

The protein is Large ribosomal subunit protein uL30 of Rhodococcus erythropolis (strain PR4 / NBRC 100887).